We begin with the raw amino-acid sequence, 499 residues long: Probable lipid II flippase MurJ (499 aa).

Transmembrane regions (helical) follow at residues 4 to 24 (LFRA…FGYV), 26 to 46 (DATV…FIAF), 88 to 108 (LLIT…EEII), 130 to 150 (FTIL…ILLV), 154 to 174 (FFVP…SLVI), 184 to 204 (LALA…FLLF), 227 to 247 (FLFT…DTFL), 265 to 285 (IYLL…LALV), 297 to 317 (TALK…FFLS), 335 to 355 (LFYT…YSLQ), 375 to 395 (AFLS…LLNF), 396 to 416 (GVYS…VYLY), 425 to 445 (IPFG…GLVY), and 455 to 475 (FILV…LIIL).

This sequence belongs to the MurJ/MviN family.

The protein localises to the cell inner membrane. The protein operates within cell wall biogenesis; peptidoglycan biosynthesis. In terms of biological role, involved in peptidoglycan biosynthesis. Transports lipid-linked peptidoglycan precursors from the inner to the outer leaflet of the cytoplasmic membrane. This Aquifex aeolicus (strain VF5) protein is Probable lipid II flippase MurJ.